Here is a 354-residue protein sequence, read N- to C-terminus: G-protein coupled receptor homolog US28 (354 aa).

Topologically, residues 1-37 (MTPTTTTAELTTEFDYDEDATPCVFTDVLNQSKPVTL) are extracellular. An N-linked (GlcNAc...) asparagine; by host glycan is attached at asparagine 30. A helical transmembrane segment spans residues 38 to 58 (FLYGVVFLFGSIGNFLVIFTI). Over 59–69 (TWRRRIQCSGD) the chain is Cytoplasmic. Residues 70 to 90 (VYFINLAAADLLFVCTLPLWM) form a helical membrane-spanning segment. The Extracellular segment spans residues 91-101 (QYLLDHNSLAS). Residues 102–122 (VPCTLLTACFYVAMFASLCFI) form a helical membrane-spanning segment. The Cytoplasmic portion of the chain corresponds to 123–145 (TEIALDRYYAIVYMRYRPVKQAC). Residues 146-166 (LFSIFWWIFAVIIAIPHFMVV) traverse the membrane as a helical segment. Residues 167 to 183 (TKKDNQCMTDYDYLEVS) are Extracellular-facing. Residues 184–204 (YPIILNVELMLGAFVIPLSVI) form a helical membrane-spanning segment. The Cytoplasmic portion of the chain corresponds to 205 to 228 (SYCYYRISRIVAVSQSRHKGRIVR). Residues 229-249 (VLIAVVLVFIIFWLPYHLTLF) traverse the membrane as a helical segment. Over 250–273 (VDTLKLLKWISSSCEFERSLKRAL) the chain is Extracellular. The helical transmembrane segment at 274–294 (ILTESLAFCHCCLNPLLYVFV) threads the bilayer. Over 295–354 (GTKFRQELHCLLAEFRQRLFSRDVSWYHSMSFSRRSSPSRRETSSDTLSDEVCRVSQIIP) the chain is Cytoplasmic.

This sequence belongs to the G-protein coupled receptor 1 family. As to quaternary structure, interacts with host GPRASP1; this interaction targets US28 to lysosomes for degradation. Interacts with host CX3CL1/Fractalkine (via N-terminus). Interacts with host Gi alpha-1 subunit GNAI1; this interaction does not lead to the catalytic activation of Gi complex. Phosphorylated. High phosphorylation occurs concomitantly with receptor endocytosis and correlate with low receptor presence at the plasma membrane.

The protein resides in the host cell membrane. Functionally, binds to a great number of different CC-chemokines including CCL5/RANTES, CCL2/MCP-1, CCL3/MIP-1-alpha as well as CX3CL1/Fractalkine. Transduces signals resulting in the activation of MAP kinase signaling pathways and augmentation of intracellular calcium ion levels, leading to alterations in chemotactic behavior of vascular smooth muscle cells and macrophages. The US28 receptor also exhibits high levels of agonist-independent signaling activity and agonist-independent endocytosis. Interacts with the host Gi complex without activating it, thereby probably interfering with the chemokine-Gi signaling. May also function as a G protein sink to sequester G protein from the cell surface via internalization. Interacts with endogenous Gaq/11 subunits and thereby constitutively activates phospholipase C. This Homo sapiens (Human) protein is G-protein coupled receptor homolog US28 (US28).